The chain runs to 1114 residues: Kinesin-like protein KIN-12B (1114 aa).

Residues 1–119 (MRSLFSSKLS…GGGGGDSGVQ (119 aa)) form a disordered region. A compositionally biased stretch (low complexity) spans 98–107 (SAASPAPEGA). In terms of domain architecture, Kinesin motor spans 117 to 459 (GVQVVVRVRP…LRFAHRAKDI (343 aa)). 197 to 204 (GQTGSGKT) provides a ligand contact to ATP. 2 coiled-coil regions span residues 772-810 (VLSA…KNQL) and 999-1043 (ELLV…DQEV). The span at 1055 to 1065 (LPSNVVQSPEP) shows a compositional bias: polar residues. The interval 1055–1081 (LPSNVVQSPEPSETGPARYDTGGSFGD) is disordered.

It belongs to the TRAFAC class myosin-kinesin ATPase superfamily. Kinesin family. KIN-12 subfamily.

In Oryza sativa subsp. japonica (Rice), this protein is Kinesin-like protein KIN-12B.